A 483-amino-acid polypeptide reads, in one-letter code: Xylulose kinase (483 aa).

A substrate-binding site is contributed by 77-78 (MH). The active-site Proton acceptor is Asp233.

This sequence belongs to the FGGY kinase family.

The enzyme catalyses D-xylulose + ATP = D-xylulose 5-phosphate + ADP + H(+). In terms of biological role, catalyzes the phosphorylation of D-xylulose to D-xylulose 5-phosphate. The chain is Xylulose kinase from Klebsiella pneumoniae.